A 108-amino-acid chain; its full sequence is UPF0060 membrane protein Spro_2289 (108 aa).

The next 4 helical transmembrane spans lie at 6-26, 31-51, 61-81, and 85-105; these read LLFF…YLWL, SAWL…LLTL, AAYG…VDGV, and ALDW…VSGW.

It belongs to the UPF0060 family.

It localises to the cell inner membrane. The sequence is that of UPF0060 membrane protein Spro_2289 from Serratia proteamaculans (strain 568).